A 278-amino-acid chain; its full sequence is Transmembrane protein 45B (278 aa).

The next 7 helical transmembrane spans lie at 7-27, 49-69, 95-115, 117-137, 149-169, 183-203, and 215-235; these read HALPGSFFLIVGLWWSVKYPL, IIEGAVKTLFAIIGILAEQFV, YLFFGVSGLMDMITYLYFHIV, LGLDRVVLAMAVFIEGFLFYF, IHSLLLFGLFGAAVSISLEVI, LLILQGTWFWQIGFVLFPPFG, and IMFITMCFCWHYLVALCIVAI. A phosphoserine mark is found at Ser-273 and Ser-275.

It belongs to the TMEM45 family.

It localises to the endosome membrane. The protein localises to the lysosome membrane. Its subcellular location is the golgi apparatus. The protein resides in the trans-Golgi network membrane. In terms of biological role, plays a role in innate immunity. In Mus musculus (Mouse), this protein is Transmembrane protein 45B (Tmem45b).